We begin with the raw amino-acid sequence, 1394 residues long: DNA-directed RNA polymerase subunit beta (1394 aa).

The protein belongs to the RNA polymerase beta chain family. In terms of assembly, the RNAP catalytic core consists of 2 alpha, 1 beta, 1 beta' and 1 omega subunit. When a sigma factor is associated with the core the holoenzyme is formed, which can initiate transcription.

It carries out the reaction RNA(n) + a ribonucleoside 5'-triphosphate = RNA(n+1) + diphosphate. Functionally, DNA-dependent RNA polymerase catalyzes the transcription of DNA into RNA using the four ribonucleoside triphosphates as substrates. This is DNA-directed RNA polymerase subunit beta from Anaplasma phagocytophilum (Ehrlichia phagocytophila).